The primary structure comprises 61 residues: MAKTSWKVKANRAPKFKVRAYTRCQLCGRSHSVLRKFRICRICFRVLAHQGRIPGIKKASW.

Positions 24, 27, 40, and 43 each coordinate Zn(2+).

This sequence belongs to the universal ribosomal protein uS14 family. Zinc-binding uS14 subfamily. Part of the 30S ribosomal subunit. Contacts proteins S3 and S10. The cofactor is Zn(2+).

Functionally, binds 16S rRNA, required for the assembly of 30S particles and may also be responsible for determining the conformation of the 16S rRNA at the A site. The polypeptide is Small ribosomal subunit protein uS14 (Mesomycoplasma hyopneumoniae (strain 232) (Mycoplasma hyopneumoniae)).